The sequence spans 282 residues: MAKILYGNEVALKIKEDLNLRIDKLKEKNIIPKLAILRMGNKPDDIAYERSIIKSCEKLNIETKVEELNEDILEEDFLKLMESLNNEKEIHGILVFRPYPKHLNENIINSSIALNKDVDCMHPLNLERIFEGDLNGFMPCTPEAVIEILKYYDIDLKGKNIVIINRSMVVGKPLSMMVLSHNATVTICHSRTIDLPSITKKADIVVTAIGKAKLIKEEYFNEDSIVMDVSINIDENGKLCGDVDFENVKEKVGAITPVPKGVGSVTTTLLLKHIVDAAERNS.

NADP(+) is bound by residues 165–167 (NRS), Ser-190, and Ile-231.

Belongs to the tetrahydrofolate dehydrogenase/cyclohydrolase family. In terms of assembly, homodimer.

It catalyses the reaction (6R)-5,10-methylene-5,6,7,8-tetrahydrofolate + NADP(+) = (6R)-5,10-methenyltetrahydrofolate + NADPH. The catalysed reaction is (6R)-5,10-methenyltetrahydrofolate + H2O = (6R)-10-formyltetrahydrofolate + H(+). It participates in one-carbon metabolism; tetrahydrofolate interconversion. Functionally, catalyzes the oxidation of 5,10-methylenetetrahydrofolate to 5,10-methenyltetrahydrofolate and then the hydrolysis of 5,10-methenyltetrahydrofolate to 10-formyltetrahydrofolate. This is Bifunctional protein FolD from Clostridium botulinum (strain ATCC 19397 / Type A).